The primary structure comprises 218 residues: Thymidylate kinase (218 aa).

ATP is bound at residue G15 to S22.

It belongs to the thymidylate kinase family.

The catalysed reaction is dTMP + ATP = dTDP + ADP. The protein operates within pyrimidine metabolism; dTTP biosynthesis. In terms of biological role, catalyzes the conversion of dTMP to dTDP. The protein is Thymidylate kinase of Caenorhabditis elegans.